The sequence spans 251 residues: uncharacterized protein (251 aa).

Belongs to the FAM243 family.

This is an uncharacterized protein from Mus musculus (Mouse).